The primary structure comprises 121 residues: LOB domain-containing protein 24 (121 aa).

The LOB domain occupies 4 to 105 (KRCAACKYLR…NELAKTQAEI (102 aa)).

It belongs to the LOB domain-containing protein family.

This Arabidopsis thaliana (Mouse-ear cress) protein is LOB domain-containing protein 24 (LBD24).